The chain runs to 281 residues: MALKTFKPYTKSTRGTILVDRAGLWKGKPFKALVEPKNSMRGRNNNGHITSRNMSGGGHKKMYRLVDFYRKKIDMPGTVERIEYDPNRSCYIMLVKFDDGQHFYYLAPQKIKVGDKVENGSEKEIKVGNCMPLRDIPVGINIHNVELKPGAGGKIARSAGTSVTISGLDGNYSLIKMTSGEVRKIDSRCMATIGVLSNPDQKNIKIGKAGRSRWLGRRPHTRGVVMNPVDHPHGGGEGKTAGGRHPVSPTGQSAKGLKTRDNKSTDKFIVRRRNNRKDSKK.

The interval 215 to 281 is disordered; it reads LGRRPHTRGV…RRNNRKDSKK (67 aa). Residues 258–269 show a composition bias toward basic and acidic residues; sequence KTRDNKSTDKFI. Residues 270-281 show a composition bias toward basic residues; the sequence is VRRRNNRKDSKK.

It belongs to the universal ribosomal protein uL2 family. In terms of assembly, part of the 50S ribosomal subunit. Forms a bridge to the 30S subunit in the 70S ribosome.

Its function is as follows. One of the primary rRNA binding proteins. Required for association of the 30S and 50S subunits to form the 70S ribosome, for tRNA binding and peptide bond formation. It has been suggested to have peptidyltransferase activity; this is somewhat controversial. Makes several contacts with the 16S rRNA in the 70S ribosome. The sequence is that of Large ribosomal subunit protein uL2 from Pelagibacter ubique (strain HTCC1062).